The primary structure comprises 654 residues: Acetyl-coenzyme A synthetase (654 aa).

CoA contacts are provided by residues 196-199 (RGGK) and threonine 316. ATP-binding positions include 392 to 394 (GEP), 416 to 421 (DTWWQT), aspartate 506, and arginine 521. Serine 529 contributes to the CoA binding site. An ATP-binding site is contributed by arginine 532. Mg(2+)-binding residues include valine 543 and valine 548. N6-acetyllysine is present on lysine 618.

This sequence belongs to the ATP-dependent AMP-binding enzyme family. Requires Mg(2+) as cofactor. In terms of processing, acetylated. Deacetylation by the SIR2-homolog deacetylase activates the enzyme.

The enzyme catalyses acetate + ATP + CoA = acetyl-CoA + AMP + diphosphate. Functionally, catalyzes the conversion of acetate into acetyl-CoA (AcCoA), an essential intermediate at the junction of anabolic and catabolic pathways. AcsA undergoes a two-step reaction. In the first half reaction, AcsA combines acetate with ATP to form acetyl-adenylate (AcAMP) intermediate. In the second half reaction, it can then transfer the acetyl group from AcAMP to the sulfhydryl group of CoA, forming the product AcCoA. This is Acetyl-coenzyme A synthetase from Methylobacillus flagellatus (strain ATCC 51484 / DSM 6875 / VKM B-1610 / KT).